The sequence spans 353 residues: Photosystem II protein D1 (353 aa).

Thr2 is modified (N-acetylthreonine). Residue Thr2 is modified to Phosphothreonine. Helical transmembrane passes span 29-46 (YIGW…TATS), 118-133 (HFLL…EWEL), and 142-156 (WIAV…AATA). His118 lines the chlorophyll a pocket. Position 126 (Tyr126) interacts with pheophytin a. Asp170 and Glu189 together coordinate [CaMn4O5] cluster. The helical transmembrane segment at 197–218 (FHMLGVAGVFGGSLFSAMHGSL) threads the bilayer. His198 serves as a coordination point for chlorophyll a. A quinone-binding positions include His215 and 264–265 (SF). Fe cation is bound at residue His215. His272 lines the Fe cation pocket. A helical membrane pass occupies residues 274-288 (FLAAWPVVGIWFTAL). Residues His332, Glu333, Asp342, and Ala344 each contribute to the [CaMn4O5] cluster site. Residues 345-353 (AIEAPSTNG) constitute a propeptide that is removed on maturation.

This sequence belongs to the reaction center PufL/M/PsbA/D family. As to quaternary structure, PSII is composed of 1 copy each of membrane proteins PsbA, PsbB, PsbC, PsbD, PsbE, PsbF, PsbH, PsbI, PsbJ, PsbK, PsbL, PsbM, PsbT, PsbX, PsbY, PsbZ, Psb30/Ycf12, at least 3 peripheral proteins of the oxygen-evolving complex and a large number of cofactors. It forms dimeric complexes. The cofactor is The D1/D2 heterodimer binds P680, chlorophylls that are the primary electron donor of PSII, and subsequent electron acceptors. It shares a non-heme iron and each subunit binds pheophytin, quinone, additional chlorophylls, carotenoids and lipids. D1 provides most of the ligands for the Mn4-Ca-O5 cluster of the oxygen-evolving complex (OEC). There is also a Cl(-1) ion associated with D1 and D2, which is required for oxygen evolution. The PSII complex binds additional chlorophylls, carotenoids and specific lipids.. In terms of processing, tyr-161 forms a radical intermediate that is referred to as redox-active TyrZ, YZ or Y-Z. Post-translationally, C-terminally processed by CTPA; processing is essential to allow assembly of the oxygen-evolving complex and thus photosynthetic growth.

Its subcellular location is the plastid. The protein localises to the chloroplast thylakoid membrane. The enzyme catalyses 2 a plastoquinone + 4 hnu + 2 H2O = 2 a plastoquinol + O2. Functionally, photosystem II (PSII) is a light-driven water:plastoquinone oxidoreductase that uses light energy to abstract electrons from H(2)O, generating O(2) and a proton gradient subsequently used for ATP formation. It consists of a core antenna complex that captures photons, and an electron transfer chain that converts photonic excitation into a charge separation. The D1/D2 (PsbA/PsbD) reaction center heterodimer binds P680, the primary electron donor of PSII as well as several subsequent electron acceptors. The chain is Photosystem II protein D1 from Gossypium barbadense (Sea Island cotton).